Here is a 379-residue protein sequence, read N- to C-terminus: Putative phosphatidate phosphatase (379 aa).

The tract at residues 1-53 (MPAVKIIMSTETSASETTPLRRSENETPDHKELAQSNSNSRQTTVNSNNNNYS) is disordered. Polar residues predominate over residues 9-18 (STETSASETT). Over residues 19–33 (PLRRSENETPDHKEL) the composition is skewed to basic and acidic residues. Residues 35–53 (QSNSNSRQTTVNSNNNNYS) are compositionally biased toward low complexity. N-linked (GlcNAc...) asparagine glycosylation is present at N51. 2 helical membrane-spanning segments follow: residues 90–110 (VGLD…FFLL) and 138–158 (MLYF…EVII). Residue N169 is glycosylated (N-linked (GlcNAc...) asparagine). The next 2 membrane-spanning stretches (helical) occupy residues 266–286 (SFPS…ALYL) and 330–350 (AGSL…SDLF).

It belongs to the PA-phosphatase related phosphoesterase family. Homodimer. This complex seems not to be involved in substrate recognition, it may confer only structural or functional stability. Expressed in embryonic gut in a pattern that guides germ cells towards mesoderm (initially in hindgut and then on lower side of gut). During extended germ band stage, expressed in ectoderm as a medial band throughout the trunk.

It localises to the membrane. The catalysed reaction is a 1,2-diacyl-sn-glycero-3-phosphate + H2O = a 1,2-diacyl-sn-glycerol + phosphate. Its function is as follows. Responsible for guiding the germ cells early in the process of migration from the lumen of the developing gut towards the overlying mesoderm, where the germ cells enter the gonads. May be involved in lipid metabolism. The polypeptide is Putative phosphatidate phosphatase (wun) (Drosophila melanogaster (Fruit fly)).